The primary structure comprises 87 residues: Putative protein KleG (87 aa).

Disordered regions lie at residues 1 to 23 (MRHSSLTPRGKSWPCSAPPWPSS) and 61 to 87 (IPTTGDRRGRRPQRHRPSTRREQIFSR). Positions 68 to 78 (RGRRPQRHRPS) are enriched in basic residues.

The chain is Putative protein KleG (kleG) from Escherichia coli.